The primary structure comprises 134 residues: Interleukin-5 (134 aa).

Positions 1-19 (MRMLLHLSLLALGAAYVYA) are cleaved as a signal peptide. O-linked (GalNAc...) threonine glycosylation occurs at threonine 22. Asparagine 47 carries an N-linked (GlcNAc...) asparagine glycan.

It belongs to the IL-5 family. In terms of assembly, homodimer; disulfide-linked. Interacts with IL5RA. Interacts with CSF2RB. In terms of tissue distribution, present in peripheral blood mononuclear cells.

It localises to the secreted. Homodimeric cytokine expressed predominantly by T-lymphocytes and NK cells that plays an important role in the survival, differentiation, and chemotaxis of eosinophils. Also acts on activated and resting B-cells to induce immunoglobulin production, growth, and differentiation. Mechanistically, exerts its biological effects through a receptor composed of IL5RA subunit and the cytokine receptor common subunit beta/CSF2RB. Binding to the receptor leads to activation of various kinases including LYN, SYK and JAK2 and thereby propagates signals through the RAS-MAPK and JAK-STAT5 pathways respectively. In Homo sapiens (Human), this protein is Interleukin-5 (IL5).